Reading from the N-terminus, the 244-residue chain is tRNA pseudouridine synthase A (244 aa).

Residue Asp52 is the Nucleophile of the active site. Tyr110 is a binding site for substrate.

It belongs to the tRNA pseudouridine synthase TruA family. As to quaternary structure, homodimer.

It catalyses the reaction uridine(38/39/40) in tRNA = pseudouridine(38/39/40) in tRNA. Its function is as follows. Formation of pseudouridine at positions 38, 39 and 40 in the anticodon stem and loop of transfer RNAs. In Clostridium acetobutylicum (strain ATCC 824 / DSM 792 / JCM 1419 / IAM 19013 / LMG 5710 / NBRC 13948 / NRRL B-527 / VKM B-1787 / 2291 / W), this protein is tRNA pseudouridine synthase A.